The following is a 288-amino-acid chain: Bis(5'-nucleosyl)-tetraphosphatase, symmetrical (288 aa).

The protein belongs to the Ap4A hydrolase family.

The enzyme catalyses P(1),P(4)-bis(5'-adenosyl) tetraphosphate + H2O = 2 ADP + 2 H(+). Its function is as follows. Hydrolyzes diadenosine 5',5'''-P1,P4-tetraphosphate to yield ADP. This chain is Bis(5'-nucleosyl)-tetraphosphatase, symmetrical, found in Pseudomonas putida (strain W619).